The following is a 926-amino-acid chain: Alpha-aminoadipic semialdehyde synthase, mitochondrial (926 aa).

The N-terminal 27 residues, 1–27 (MLQVHRTGLGRLGVSLSKGLHHKAVLA), are a transit peptide targeting the mitochondrion. The lysine-ketoglutarate reductase stretch occupies residues 28–476 (VRREDVNAWE…ESRERAQSLS (449 aa)). 2 positions are modified to N6-acetyllysine: Lys48 and Lys56. Residue Lys93 is modified to N6-acetyllysine; alternate. The residue at position 93 (Lys93) is an N6-succinyllysine; alternate. The residue at position 128 (Lys128) is an N6-acetyllysine. Lys138 bears the N6-acetyllysine; alternate mark. Lys138 is subject to N6-succinyllysine; alternate. Position 274 is an N6-succinyllysine (Lys274). Lys286 is modified (N6-acetyllysine; alternate). The residue at position 286 (Lys286) is an N6-succinyllysine; alternate. Position 333 is an N6-succinyllysine (Lys333). At Lys458 the chain carries N6-acetyllysine; alternate. N6-succinyllysine; alternate is present on Lys458. A saccharopine dehydrogenase region spans residues 477-926 (MGTRRKVLVL…IYTTQSTIKP (450 aa)). The NAD(+) site is built by Ser488, Asp512, and Gln516. Lys523 is modified (N6-acetyllysine; alternate). An N6-succinyllysine; alternate modification is found at Lys523. Ile533 provides a ligand contact to NAD(+). Residue Lys535 is modified to N6-acetyllysine; alternate. Lys535 bears the N6-succinyllysine; alternate mark. The NAD(+) site is built by Leu554, Ala576, and Ser577. Residue 577–578 (SY) coordinates L-saccharopine. N6-acetyllysine; alternate is present on Lys584. The residue at position 584 (Lys584) is an N6-succinyllysine; alternate. Residues Leu603, Asp604, and Pro605 each coordinate NAD(+). Asp604 provides a ligand contact to L-saccharopine. Arg703 is an L-saccharopine binding site. Lys707 carries the post-translational modification N6-acetyllysine. Residue 724 to 726 (TLR) coordinates L-saccharopine. Residue Lys732 is modified to N6-succinyllysine. N6-acetyllysine is present on Lys739. Residue Lys761 is modified to N6-acetyllysine; alternate. The residue at position 761 (Lys761) is an N6-succinyllysine; alternate. Position 780 is an N6-acetyllysine (Lys780).

In the N-terminal section; belongs to the AlaDH/PNT family. It in the C-terminal section; belongs to the saccharopine dehydrogenase family. In terms of assembly, homotetramer. Expressed in all 16 tissues examined with highest expression in the liver.

The protein localises to the mitochondrion. It carries out the reaction L-saccharopine + NADP(+) + H2O = L-lysine + 2-oxoglutarate + NADPH + H(+). It catalyses the reaction L-saccharopine + NAD(+) + H2O = (S)-2-amino-6-oxohexanoate + L-glutamate + NADH + H(+). It participates in amino-acid degradation; L-lysine degradation via saccharopine pathway; glutaryl-CoA from L-lysine: step 1/6. It functions in the pathway amino-acid degradation; L-lysine degradation via saccharopine pathway; glutaryl-CoA from L-lysine: step 2/6. Bifunctional enzyme that catalyzes the first two steps in lysine degradation. The chain is Alpha-aminoadipic semialdehyde synthase, mitochondrial from Homo sapiens (Human).